Here is a 314-residue protein sequence, read N- to C-terminus: Porphobilinogen deaminase (314 aa).

At Cys-241 the chain carries S-(dipyrrolylmethanemethyl)cysteine.

The protein belongs to the HMBS family. In terms of assembly, monomer. The cofactor is dipyrromethane.

It catalyses the reaction 4 porphobilinogen + H2O = hydroxymethylbilane + 4 NH4(+). The protein operates within porphyrin-containing compound metabolism; protoporphyrin-IX biosynthesis; coproporphyrinogen-III from 5-aminolevulinate: step 2/4. It participates in porphyrin-containing compound metabolism; chlorophyll biosynthesis. Its function is as follows. Tetrapolymerization of the monopyrrole PBG into the hydroxymethylbilane pre-uroporphyrinogen in several discrete steps. The sequence is that of Porphobilinogen deaminase from Chloroherpeton thalassium (strain ATCC 35110 / GB-78).